The following is a 157-amino-acid chain: Biotin carboxyl carrier protein of acetyl-CoA carboxylase (157 aa).

The region spanning Tyr80–Glu156 is the Biotinyl-binding domain. Lys122 is subject to N6-biotinyllysine.

The protein localises to the plastid. Its subcellular location is the chloroplast. It participates in lipid metabolism; fatty acid biosynthesis. Its function is as follows. This protein is a component of the acetyl coenzyme A carboxylase complex; first, biotin carboxylase catalyzes the carboxylation of the carrier protein and then the transcarboxylase transfers the carboxyl group to form malonyl-CoA. This chain is Biotin carboxyl carrier protein of acetyl-CoA carboxylase (accB), found in Porphyra purpurea (Red seaweed).